The sequence spans 153 residues: Superoxide dismutase [Cu-Zn] (153 aa).

Cu cation is bound by residues H45, H47, and H62. C56 and C145 are disulfide-bonded. Zn(2+) contacts are provided by H62, H70, H79, and D82. Position 119 (H119) interacts with Cu cation.

It belongs to the Cu-Zn superoxide dismutase family. Homodimer. Cu cation serves as cofactor. The cofactor is Zn(2+).

Its subcellular location is the cytoplasm. The catalysed reaction is 2 superoxide + 2 H(+) = H2O2 + O2. In terms of biological role, destroys radicals which are normally produced within the cells and which are toxic to biological systems. This is Superoxide dismutase [Cu-Zn] from Ceratitis capitata (Mediterranean fruit fly).